We begin with the raw amino-acid sequence, 279 residues long: Pantothenate synthetase (279 aa).

31-38 (MGNLHGGH) contributes to the ATP binding site. The active-site Proton donor is His38. Gln62 provides a ligand contact to (R)-pantoate. Gln62 is a beta-alanine binding site. 150-153 (GRKD) is a binding site for ATP. Gln156 provides a ligand contact to (R)-pantoate. ATP contacts are provided by residues Val179 and 187 to 190 (KSSR).

It belongs to the pantothenate synthetase family. As to quaternary structure, homodimer.

The protein resides in the cytoplasm. The catalysed reaction is (R)-pantoate + beta-alanine + ATP = (R)-pantothenate + AMP + diphosphate + H(+). The protein operates within cofactor biosynthesis; (R)-pantothenate biosynthesis; (R)-pantothenate from (R)-pantoate and beta-alanine: step 1/1. In terms of biological role, catalyzes the condensation of pantoate with beta-alanine in an ATP-dependent reaction via a pantoyl-adenylate intermediate. This chain is Pantothenate synthetase, found in Stenotrophomonas maltophilia (strain R551-3).